Here is a 401-residue protein sequence, read N- to C-terminus: N-acetyllactosaminide beta-1,6-N-acetylglucosaminyl-transferase (401 aa).

Over 1 to 7 (MPPSVRY) the chain is Cytoplasmic. A helical; Signal-anchor for type II membrane protein membrane pass occupies residues 8–28 (FFIVSVTTVIVFIVLYVLSFG). Residues 29–401 (GDQSYQKLNI…EIAIQPSWYF (373 aa)) lie on the Lumenal side of the membrane. N-linked (GlcNAc...) asparagine glycans are attached at residues asparagine 37, asparagine 255, asparagine 315, and asparagine 389.

It belongs to the glycosyltransferase 14 family.

The protein localises to the golgi apparatus membrane. It carries out the reaction a beta-D-Gal-(1-&gt;4)-beta-D-GlcNAc-(1-&gt;3)-beta-D-Gal-(1-&gt;4)-beta-D-GlcNAc derivative + UDP-N-acetyl-alpha-D-glucosamine = a beta-D-Gal-(1-&gt;4)-beta-D-GlcNAc-(1-&gt;3)-[beta-D-GlcNAc-(1-&gt;6)]-beta-D-Gal-(1-&gt;4)-N-acetyl-beta-D-glucosaminyl derivative + UDP + H(+). The protein operates within protein modification; protein glycosylation. In terms of biological role, branching enzyme that converts linear into branched poly-N-acetyllactosaminoglycans. Introduces the blood group I antigen during embryonic development. It is closely associated with the development and maturation of erythroid cells. The sequence is that of N-acetyllactosaminide beta-1,6-N-acetylglucosaminyl-transferase (Gcnt2) from Mus musculus (Mouse).